Here is a 327-residue protein sequence, read N- to C-terminus: Methionine import ATP-binding protein MetN (327 aa).

In terms of domain architecture, ABC transporter spans 3 to 239 (VELKNIEKIY…PKHAVTKELL (237 aa)). An ATP-binding site is contributed by 36–43 (GYSGAGKS).

It belongs to the ABC transporter superfamily. Methionine importer (TC 3.A.1.24) family. As to quaternary structure, the complex is composed of two ATP-binding proteins (MetN), two transmembrane proteins (MetI) and a solute-binding protein (MetQ).

The protein localises to the cell inner membrane. It carries out the reaction L-methionine(out) + ATP + H2O = L-methionine(in) + ADP + phosphate + H(+). The enzyme catalyses D-methionine(out) + ATP + H2O = D-methionine(in) + ADP + phosphate + H(+). In terms of biological role, part of the ABC transporter complex MetNIQ involved in methionine import. Responsible for energy coupling to the transport system. The sequence is that of Methionine import ATP-binding protein MetN from Helicobacter pylori (strain J99 / ATCC 700824) (Campylobacter pylori J99).